The following is a 71-amino-acid chain: Vitellogenin-A1 (71 aa).

The signal sequence occupies residues 1–15; that stretch reads MRGIILALLLAIAGS. The Vitellogenin domain maps to 24–71; sequence FSESKTSVYNYEAVILNGFPESGLSRAGIKINCKVEISAYAQRSYFLK.

In terms of tissue distribution, produced by the liver, secreted into the blood and then sequestered by receptor mediated endocytosis into growing oocytes, where it is generally cleaved, giving rise to the respective yolk components.

In terms of biological role, precursor of the major egg-yolk proteins that are sources of nutrients during early development of oviparous organisms. The sequence is that of Vitellogenin-A1 from Xenopus laevis (African clawed frog).